We begin with the raw amino-acid sequence, 155 residues long: Lipoprotein signal peptidase (155 aa).

4 helical membrane passes run 7–27 (WFWIVAVIGLILDQVTKYITV), 39–59 (IIPGVFHFTYVINTGAAFSAF), 63–83 (VGWLKWLSLLVSLGLMAFAYF), and 96–116 (GFILAGAFGNGIDRFLFGYVV). Catalysis depends on residues Asp-117 and Asp-133. Residues 126–146 (FPVFNLADVFINIGIICLLIS) form a helical membrane-spanning segment.

It belongs to the peptidase A8 family.

Its subcellular location is the cell inner membrane. The enzyme catalyses Release of signal peptides from bacterial membrane prolipoproteins. Hydrolyzes -Xaa-Yaa-Zaa-|-(S,diacylglyceryl)Cys-, in which Xaa is hydrophobic (preferably Leu), and Yaa (Ala or Ser) and Zaa (Gly or Ala) have small, neutral side chains.. It participates in protein modification; lipoprotein biosynthesis (signal peptide cleavage). This protein specifically catalyzes the removal of signal peptides from prolipoproteins. In Microcystis aeruginosa (strain NIES-843 / IAM M-2473), this protein is Lipoprotein signal peptidase.